Here is a 104-residue protein sequence, read N- to C-terminus: Urease subunit beta (104 aa).

It belongs to the urease beta subunit family. Heterotrimer of UreA (gamma), UreB (beta) and UreC (alpha) subunits. Three heterotrimers associate to form the active enzyme.

It localises to the cytoplasm. It catalyses the reaction urea + 2 H2O + H(+) = hydrogencarbonate + 2 NH4(+). Its pathway is nitrogen metabolism; urea degradation; CO(2) and NH(3) from urea (urease route): step 1/1. The sequence is that of Urease subunit beta from Synechococcus sp. (strain RCC307).